A 241-amino-acid polypeptide reads, in one-letter code: Triosephosphate isomerase (241 aa).

Position 8 to 10 (asparagine 8 to lysine 10) interacts with substrate. Histidine 93 serves as the catalytic Electrophile. The Proton acceptor role is filled by glutamate 163. Substrate contacts are provided by residues glycine 169, serine 205, and glycine 226–glycine 227.

It belongs to the triosephosphate isomerase family. Homodimer.

The protein localises to the cytoplasm. The catalysed reaction is D-glyceraldehyde 3-phosphate = dihydroxyacetone phosphate. Its pathway is carbohydrate biosynthesis; gluconeogenesis. The protein operates within carbohydrate degradation; glycolysis; D-glyceraldehyde 3-phosphate from glycerone phosphate: step 1/1. Functionally, involved in the gluconeogenesis. Catalyzes stereospecifically the conversion of dihydroxyacetone phosphate (DHAP) to D-glyceraldehyde-3-phosphate (G3P). The protein is Triosephosphate isomerase of Bdellovibrio bacteriovorus (strain ATCC 15356 / DSM 50701 / NCIMB 9529 / HD100).